The following is a 96-amino-acid chain: Protein transport protein Sec61 subunit beta (96 aa).

Polar residues predominate over residues 1 to 17 (MPGPTPSGTNVGSSGRS). A disordered region spans residues 1–54 (MPGPTPSGTNVGSSGRSPSKAVAARAAGSTVRQRKNASCGTRSAGRTTSAGTGG). The residue at position 2 (Pro-2) is an N-acetylproline. Over 2 to 70 (PGPTPSGTNV…EDSPGLKVGP (69 aa)) the chain is Cytoplasmic. Ser-7 carries the post-translational modification Phosphoserine. Thr-9 carries the phosphothreonine modification. Residues Ser-13, Ser-14, and Ser-17 each carry the phosphoserine modification. Cys-39 carries S-palmitoyl cysteine lipidation. Positions 40–50 (GTRSAGRTTSA) are enriched in low complexity. A helical membrane pass occupies residues 71–91 (VPVLVMSLLFIAAVFMLHIWG).

This sequence belongs to the SEC61-beta family. In terms of assembly, the SEC61 channel-forming translocon complex consists of channel-forming core components SEC61A1, SEC61B and SEC61G and different auxiliary components such as SEC62 and SEC63. The SEC61 channel associates with the multi-pass translocon (MPT) complex. Interacts with TRAM1.

The protein resides in the endoplasmic reticulum membrane. Functionally, component of SEC61 channel-forming translocon complex that mediates transport of signal peptide-containing precursor polypeptides across the endoplasmic reticulum (ER). Forms a ribosome receptor and a gated pore in the ER membrane, both functions required for cotranslational translocation of nascent polypeptides. The SEC61 channel is also involved in ER membrane insertion of transmembrane proteins: it mediates membrane insertion of the first few transmembrane segments of proteins, while insertion of subsequent transmembrane regions of multi-pass membrane proteins is mediated by the multi-pass translocon (MPT) complex. The SEC61 channel cooperates with the translocating protein TRAM1 to import nascent proteins into the ER. Required for PKD1/Polycystin-1 biogenesis. The protein is Protein transport protein Sec61 subunit beta of Mus musculus (Mouse).